Here is a 311-residue protein sequence, read N- to C-terminus: MKHLTGLCNCSAATIATLLELASDYKKELLKSNPQFQPTLCNKRIALVFFENSTRTRFSFELAARHLGASTLNFAAAASSVSKGETLSDTIKNLEAMQVDGFVLRHPSSGAANFITTITSRPVVNAGDGANEHPTQALLDLFTLQEHFGRLKGIRIIIIGDVLHSRVARSNIYGLLSVGAEVGLCSPVTLMPPDADQLGITMFTNLEDALAWADAAMVLRLQLERAAGGYLPSLEEYSVYYGLTDERLDRIQKNLLVLHPGPINREIEISNNVADRIQPPGYSKSMLLEQVTNGVAVRMAVLHTLLAENGK.

Residues R55 and T56 each contribute to the carbamoyl phosphate site. An L-aspartate-binding site is contributed by K83. The carbamoyl phosphate site is built by R105, H133, and Q136. Residues R166 and R220 each contribute to the L-aspartate site. Carbamoyl phosphate-binding residues include G261 and P262.

The protein belongs to the aspartate/ornithine carbamoyltransferase superfamily. ATCase family. As to quaternary structure, heterododecamer (2C3:3R2) of six catalytic PyrB chains organized as two trimers (C3), and six regulatory PyrI chains organized as three dimers (R2).

It carries out the reaction carbamoyl phosphate + L-aspartate = N-carbamoyl-L-aspartate + phosphate + H(+). It participates in pyrimidine metabolism; UMP biosynthesis via de novo pathway; (S)-dihydroorotate from bicarbonate: step 2/3. Catalyzes the condensation of carbamoyl phosphate and aspartate to form carbamoyl aspartate and inorganic phosphate, the committed step in the de novo pyrimidine nucleotide biosynthesis pathway. This is Aspartate carbamoyltransferase catalytic subunit from Chlorobium chlorochromatii (strain CaD3).